We begin with the raw amino-acid sequence, 214 residues long: Riboflavin kinase (214 aa).

Residues 1 to 26 are disordered; that stretch reads MRPDGPRDPVVGPDSGPEPPYPVRLS. Mg(2+)-binding residues include Thr44 and Asn46. Catalysis depends on Glu112, which acts as the Nucleophile.

It belongs to the flavokinase family. Zn(2+) is required as a cofactor. It depends on Mg(2+) as a cofactor.

It carries out the reaction riboflavin + ATP = FMN + ADP + H(+). It participates in cofactor biosynthesis; FMN biosynthesis; FMN from riboflavin (ATP route): step 1/1. Its function is as follows. Catalyzes the phosphorylation of riboflavin (vitamin B2) to form flavin mononucleotide (FMN) coenzyme. The sequence is that of Riboflavin kinase (fmn1) from Aspergillus clavatus (strain ATCC 1007 / CBS 513.65 / DSM 816 / NCTC 3887 / NRRL 1 / QM 1276 / 107).